The chain runs to 258 residues: PHD finger protein ALFIN-LIKE 5 (258 aa).

A disordered region spans residues 143–205 (AKKQTKEKAP…EEEERDNTLC (63 aa)). Residues 152 to 165 (PNSTNKPNKPSSKM) are compositionally biased toward polar residues. The segment covering 184–200 (DDDESGDEYADEEEEER) has biased composition (acidic residues). The PHD-type zinc finger occupies 202 to 254 (NTLCGSCGTNDGKDEFWICCDSCERWYHGKCVKITPARAEHIKHYKCPDCGNK).

The protein belongs to the Alfin family.

It is found in the nucleus. Its function is as follows. Histone-binding component that specifically recognizes H3 tails trimethylated on 'Lys-4' (H3K4me3), which mark transcription start sites of virtually all active genes. The chain is PHD finger protein ALFIN-LIKE 5 from Oryza sativa subsp. indica (Rice).